The primary structure comprises 120 residues: Large ribosomal subunit protein bL12 (120 aa).

This sequence belongs to the bacterial ribosomal protein bL12 family. Homodimer. Part of the ribosomal stalk of the 50S ribosomal subunit. Forms a multimeric L10(L12)X complex, where L10 forms an elongated spine to which 2 to 4 L12 dimers bind in a sequential fashion. Binds GTP-bound translation factors.

Functionally, forms part of the ribosomal stalk which helps the ribosome interact with GTP-bound translation factors. Is thus essential for accurate translation. This chain is Large ribosomal subunit protein bL12, found in Aeromonas salmonicida (strain A449).